The sequence spans 135 residues: Transcription antitermination protein NusB (135 aa).

It belongs to the NusB family.

Its function is as follows. Involved in transcription antitermination. Required for transcription of ribosomal RNA (rRNA) genes. Binds specifically to the boxA antiterminator sequence of the ribosomal RNA (rrn) operons. In Wolinella succinogenes (strain ATCC 29543 / DSM 1740 / CCUG 13145 / JCM 31913 / LMG 7466 / NCTC 11488 / FDC 602W) (Vibrio succinogenes), this protein is Transcription antitermination protein NusB.